The following is a 125-amino-acid chain: Oxytocin-neurophysin 1 (125 aa).

The signal sequence occupies residues 1–19 (MAGSSLACCLLGLLALTSA). Cysteines 20 and 25 form a disulfide. Glycine amide is present on G28. 7 disulfides stabilise this stretch: C41-C85, C44-C58, C52-C75, C59-C65, C92-C104, C98-C116, and C105-C110.

It belongs to the vasopressin/oxytocin family. As to quaternary structure, interacts with oxytocin receptor (Ki=1.5 nM). Interacts with vasopressin V1aR/AVPR1A (Ki=37 nM), V1bR/AVPR1B (Ki=222 nM), and V2R/AVPR2 receptors (Ki=823 nM).

Neurophysin 1 specifically binds oxytocin. Functionally, oxytocin causes contraction of the smooth muscle of the uterus and of the mammary gland. Acts by binding to oxytocin receptor (OXTR). In Ovis aries (Sheep), this protein is Oxytocin-neurophysin 1 (OXT).